We begin with the raw amino-acid sequence, 237 residues long: CDP-diacylglycerol--serine O-phosphatidyltransferase (237 aa).

A run of 8 helical transmembrane segments spans residues 3-23, 25-45, 73-93, 95-115, 124-144, 150-170, 184-204, and 207-227; these read INPL…LGMM, IFYA…ASLI, VIAF…YNFG, IGMA…ARFN, YSFI…CVLL, FLEG…GVLM, WNLK…VRPL, and LSVF…FLMV.

The protein belongs to the CDP-alcohol phosphatidyltransferase class-I family.

The protein resides in the cell membrane. It catalyses the reaction a CDP-1,2-diacyl-sn-glycerol + L-serine = a 1,2-diacyl-sn-glycero-3-phospho-L-serine + CMP + H(+). This chain is CDP-diacylglycerol--serine O-phosphatidyltransferase (pssA), found in Helicobacter pylori (strain ATCC 700392 / 26695) (Campylobacter pylori).